The sequence spans 142 residues: ATP synthase epsilon chain (142 aa).

This sequence belongs to the ATPase epsilon chain family. In terms of assembly, F-type ATPases have 2 components, CF(1) - the catalytic core - and CF(0) - the membrane proton channel. CF(1) has five subunits: alpha(3), beta(3), gamma(1), delta(1), epsilon(1). CF(0) has three main subunits: a, b and c.

It localises to the cell inner membrane. Its function is as follows. Produces ATP from ADP in the presence of a proton gradient across the membrane. The sequence is that of ATP synthase epsilon chain from Maridesulfovibrio salexigens (strain ATCC 14822 / DSM 2638 / NCIMB 8403 / VKM B-1763) (Desulfovibrio salexigens).